Consider the following 616-residue polypeptide: Dihydroxy-acid dehydratase (616 aa).

Asp-81 is a binding site for Mg(2+). Cys-122 lines the [2Fe-2S] cluster pocket. The Mg(2+) site is built by Asp-123 and Lys-124. Residue Lys-124 is modified to N6-carboxylysine. Cys-195 is a [2Fe-2S] cluster binding site. Mg(2+) is bound at residue Glu-491. The Proton acceptor role is filled by Ser-517.

It belongs to the IlvD/Edd family. Homodimer. Requires [2Fe-2S] cluster as cofactor. Mg(2+) is required as a cofactor.

It catalyses the reaction (2R)-2,3-dihydroxy-3-methylbutanoate = 3-methyl-2-oxobutanoate + H2O. The enzyme catalyses (2R,3R)-2,3-dihydroxy-3-methylpentanoate = (S)-3-methyl-2-oxopentanoate + H2O. It participates in amino-acid biosynthesis; L-isoleucine biosynthesis; L-isoleucine from 2-oxobutanoate: step 3/4. It functions in the pathway amino-acid biosynthesis; L-valine biosynthesis; L-valine from pyruvate: step 3/4. Its function is as follows. Functions in the biosynthesis of branched-chain amino acids. Catalyzes the dehydration of (2R,3R)-2,3-dihydroxy-3-methylpentanoate (2,3-dihydroxy-3-methylvalerate) into 2-oxo-3-methylpentanoate (2-oxo-3-methylvalerate) and of (2R)-2,3-dihydroxy-3-methylbutanoate (2,3-dihydroxyisovalerate) into 2-oxo-3-methylbutanoate (2-oxoisovalerate), the penultimate precursor to L-isoleucine and L-valine, respectively. The polypeptide is Dihydroxy-acid dehydratase (Escherichia coli O9:H4 (strain HS)).